Here is a 201-residue protein sequence, read N- to C-terminus: ATP-dependent Clp protease proteolytic subunit (201 aa).

S98 functions as the Nucleophile in the catalytic mechanism. H123 is an active-site residue.

Belongs to the peptidase S14 family. In terms of assembly, fourteen ClpP subunits assemble into 2 heptameric rings which stack back to back to give a disk-like structure with a central cavity, resembling the structure of eukaryotic proteasomes.

It localises to the cytoplasm. It catalyses the reaction Hydrolysis of proteins to small peptides in the presence of ATP and magnesium. alpha-casein is the usual test substrate. In the absence of ATP, only oligopeptides shorter than five residues are hydrolyzed (such as succinyl-Leu-Tyr-|-NHMec, and Leu-Tyr-Leu-|-Tyr-Trp, in which cleavage of the -Tyr-|-Leu- and -Tyr-|-Trp bonds also occurs).. In terms of biological role, cleaves peptides in various proteins in a process that requires ATP hydrolysis. Has a chymotrypsin-like activity. Plays a major role in the degradation of misfolded proteins. This chain is ATP-dependent Clp protease proteolytic subunit, found in Rickettsia canadensis (strain McKiel).